The following is a 292-amino-acid chain: tRNA pseudouridine synthase B (292 aa).

Asp40 functions as the Nucleophile in the catalytic mechanism.

The protein belongs to the pseudouridine synthase TruB family. Type 1 subfamily.

The enzyme catalyses uridine(55) in tRNA = pseudouridine(55) in tRNA. Functionally, responsible for synthesis of pseudouridine from uracil-55 in the psi GC loop of transfer RNAs. This chain is tRNA pseudouridine synthase B, found in Mycoplasma capricolum subsp. capricolum (strain California kid / ATCC 27343 / NCTC 10154).